A 213-amino-acid polypeptide reads, in one-letter code: Phosphoribosyl-dephospho-CoA transferase (213 aa).

Active-site residues include D135 and D137.

The protein belongs to the MdcG family.

It carries out the reaction apo-[malonate decarboxylase ACP] + 2'-(5''-triphospho-alpha-D-ribosyl)-3'-dephospho-CoA = holo-[malonate decarboxylase ACP] + diphosphate. Transfers 2'-(5-triphosphoribosyl)-3'-dephosphocoenzyme-A to the apo-[acyl-carrier-protein] of the malonate decarboxylase to yield holo-[acyl-carrier-protein]. This is Phosphoribosyl-dephospho-CoA transferase from Xanthomonas axonopodis pv. citri (strain 306).